Here is a 210-residue protein sequence, read N- to C-terminus: Thymidylate kinase (210 aa).

10 to 17 is an ATP binding site; sequence GPEGAGKS.

It belongs to the thymidylate kinase family.

It catalyses the reaction dTMP + ATP = dTDP + ADP. Phosphorylation of dTMP to form dTDP in both de novo and salvage pathways of dTTP synthesis. In Pseudomonas syringae pv. tomato (strain ATCC BAA-871 / DC3000), this protein is Thymidylate kinase.